The primary structure comprises 64 residues: MKSTLMTASLLILVVLFIIDYASVYAEFIDGEISLERERDIPCFETCMKLYHIPKLCYIKCRKH.

An N-terminal signal peptide occupies residues 1–26 (MKSTLMTASLLILVVLFIIDYASVYA). A propeptide spanning residues 27-38 (EFIDGEISLERE) is cleaved from the precursor. Disulfide bonds link cysteine 43–cysteine 61 and cysteine 47–cysteine 57.

It belongs to the short scorpion toxin superfamily. Potassium channel inhibitor kappa-KTx family. Kappa-KTx 4 subfamily. As to expression, expressed by the venom gland.

The protein resides in the secreted. Its function is as follows. Potassium channel inhibitor (Kv). The sequence is that of Potassium channel toxin kappa-KTx 4.1 from Heterometrus petersii (Asian forest scorpion).